Consider the following 259-residue polypeptide: 5'-nucleotidase SurE (259 aa).

Positions 8, 9, 40, and 92 each coordinate a divalent metal cation.

Belongs to the SurE nucleotidase family. Requires a divalent metal cation as cofactor.

It is found in the cytoplasm. It catalyses the reaction a ribonucleoside 5'-phosphate + H2O = a ribonucleoside + phosphate. Functionally, nucleotidase that shows phosphatase activity on nucleoside 5'-monophosphates. The chain is 5'-nucleotidase SurE from Xanthomonas campestris pv. campestris (strain B100).